The chain runs to 176 residues: HTH-type transcriptional regulator DctR (176 aa).

Residues 109–174 form the HTH luxR-type domain; the sequence is VPEADVSLSR…ELVRHQHINY (66 aa). The H-T-H motif DNA-binding region spans 133-152; it reads TEDILEKLKISLKTFYCHKH.

In terms of biological role, may act as a transcriptional regulator of dctA. This is HTH-type transcriptional regulator DctR (dctR) from Escherichia coli O6:H1 (strain CFT073 / ATCC 700928 / UPEC).